Reading from the N-terminus, the 292-residue chain is Shikimate dehydrogenase (NADP(+)) (292 aa).

Shikimate-binding positions include 25–27 and threonine 72; that span reads SKS. Residue lysine 76 is the Proton acceptor of the active site. The shikimate site is built by asparagine 97 and aspartate 113. Residues 137 to 141, 161 to 166, and methionine 230 each bind NADP(+); these read GAGGA and NRTQSK. Tyrosine 232 is a binding site for shikimate. Glycine 254 serves as a coordination point for NADP(+).

This sequence belongs to the shikimate dehydrogenase family. In terms of assembly, homodimer.

The catalysed reaction is shikimate + NADP(+) = 3-dehydroshikimate + NADPH + H(+). It participates in metabolic intermediate biosynthesis; chorismate biosynthesis; chorismate from D-erythrose 4-phosphate and phosphoenolpyruvate: step 4/7. Involved in the biosynthesis of the chorismate, which leads to the biosynthesis of aromatic amino acids. Catalyzes the reversible NADPH linked reduction of 3-dehydroshikimate (DHSA) to yield shikimate (SA). This is Shikimate dehydrogenase (NADP(+)) from Shewanella sp. (strain MR-4).